The sequence spans 206 residues: Guanylate kinase (206 aa).

The Guanylate kinase-like domain maps to 5 to 183 (FNLLILSGPS…SKEIILSIAK (179 aa)). 12–19 (GPSGAGKS) lines the ATP pocket.

Belongs to the guanylate kinase family.

Its subcellular location is the cytoplasm. It catalyses the reaction GMP + ATP = GDP + ADP. Functionally, essential for recycling GMP and indirectly, cGMP. This Helicobacter pylori (strain HPAG1) protein is Guanylate kinase.